The sequence spans 792 residues: Lon protease (792 aa).

One can recognise a Lon N-terminal domain in the interval 16–211 (DAVVVVPVSN…KVSAFLAQRL (196 aa)). Position 361–368 (361–368 (GPPGVGKT)) interacts with ATP. Residues 597–778 (TSVPGVATGL…EDAIEAGLDP (182 aa)) form the Lon proteolytic domain. Active-site residues include S684 and K727.

It belongs to the peptidase S16 family. Homohexamer. Organized in a ring with a central cavity.

Its subcellular location is the cytoplasm. It carries out the reaction Hydrolysis of proteins in presence of ATP.. ATP-dependent serine protease that mediates the selective degradation of mutant and abnormal proteins as well as certain short-lived regulatory proteins. Required for cellular homeostasis and for survival from DNA damage and developmental changes induced by stress. Degrades polypeptides processively to yield small peptide fragments that are 5 to 10 amino acids long. Binds to DNA in a double-stranded, site-specific manner. This is Lon protease from Phenylobacterium zucineum (strain HLK1).